Consider the following 379-residue polypeptide: Anhydro-N-acetylmuramic acid kinase (379 aa).

12 to 19 (GTSLDGMD) contacts ATP.

Belongs to the anhydro-N-acetylmuramic acid kinase family.

It carries out the reaction 1,6-anhydro-N-acetyl-beta-muramate + ATP + H2O = N-acetyl-D-muramate 6-phosphate + ADP + H(+). Its pathway is amino-sugar metabolism; 1,6-anhydro-N-acetylmuramate degradation. The protein operates within cell wall biogenesis; peptidoglycan recycling. In terms of biological role, catalyzes the specific phosphorylation of 1,6-anhydro-N-acetylmuramic acid (anhMurNAc) with the simultaneous cleavage of the 1,6-anhydro ring, generating MurNAc-6-P. Is required for the utilization of anhMurNAc either imported from the medium or derived from its own cell wall murein, and thus plays a role in cell wall recycling. The protein is Anhydro-N-acetylmuramic acid kinase of Gloeobacter violaceus (strain ATCC 29082 / PCC 7421).